Reading from the N-terminus, the 84-residue chain is Small ribosomal subunit protein bS20 (84 aa).

Belongs to the bacterial ribosomal protein bS20 family.

In terms of biological role, binds directly to 16S ribosomal RNA. The sequence is that of Small ribosomal subunit protein bS20 from Ligilactobacillus salivarius (strain UCC118) (Lactobacillus salivarius).